The sequence spans 221 residues: Iron-sulfur cluster repair protein YtfE (221 aa).

The protein belongs to the RIC family. YtfE subfamily. In terms of assembly, homodimer.

The protein resides in the cytoplasm. Functionally, di-iron-containing protein involved in the repair of iron-sulfur clusters damaged by oxidative and nitrosative stress conditions. In Pectobacterium carotovorum subsp. carotovorum (strain PC1), this protein is Iron-sulfur cluster repair protein YtfE.